Reading from the N-terminus, the 339-residue chain is Glycerol-3-phosphate dehydrogenase [NAD(P)+] (339 aa).

Residues Ser15, Tyr16, His36, and Lys110 each contribute to the NADPH site. Sn-glycerol 3-phosphate is bound by residues Lys110, Gly139, and Thr141. NADPH is bound at residue Ala143. 5 residues coordinate sn-glycerol 3-phosphate: Lys195, Asp248, Ser258, Arg259, and Asn260. Catalysis depends on Lys195, which acts as the Proton acceptor. Arg259 is an NADPH binding site. Positions 283 and 285 each coordinate NADPH.

The protein belongs to the NAD-dependent glycerol-3-phosphate dehydrogenase family.

It localises to the cytoplasm. It catalyses the reaction sn-glycerol 3-phosphate + NAD(+) = dihydroxyacetone phosphate + NADH + H(+). The enzyme catalyses sn-glycerol 3-phosphate + NADP(+) = dihydroxyacetone phosphate + NADPH + H(+). Its pathway is membrane lipid metabolism; glycerophospholipid metabolism. Functionally, catalyzes the reduction of the glycolytic intermediate dihydroxyacetone phosphate (DHAP) to sn-glycerol 3-phosphate (G3P), the key precursor for phospholipid synthesis. The sequence is that of Glycerol-3-phosphate dehydrogenase [NAD(P)+] from Cronobacter sakazakii (strain ATCC BAA-894) (Enterobacter sakazakii).